The sequence spans 216 residues: Penicillin-binding protein activator LpoB (216 aa).

The first 20 residues, 1–20 (MIKNLSRYALVTAFALFLSG), serve as a signal peptide directing secretion. Cys-21 carries N-palmitoyl cysteine lipidation. A lipid anchor (S-diacylglycerol cysteine) is attached at Cys-21. Positions 28–77 (QPAPVDEAKPGTEQPAQPTQPVPTVPSVPTVPAQPGPIEHPDQTSQPAPR) are disordered.

The protein belongs to the LpoB family. As to quaternary structure, interacts with PBP1b.

It localises to the cell outer membrane. Its function is as follows. Regulator of peptidoglycan synthesis that is essential for the function of penicillin-binding protein 1B (PBP1b). This chain is Penicillin-binding protein activator LpoB, found in Enterobacter sp. (strain 638).